A 704-amino-acid polypeptide reads, in one-letter code: Arylphorin (704 aa).

The first 16 residues, 1–16 (MKIVLVLAGLIALVQS), serve as a signal peptide directing secretion. Asn-73, Asn-212, and Asn-360 each carry an N-linked (GlcNAc...) asparagine glycan.

Belongs to the hemocyanin family. As to quaternary structure, homohexamer of two stacked trimers; disulfide-linked. In terms of processing, glycosylation at Asn-360 is required for proper folding.

Its subcellular location is the secreted. It localises to the extracellular space. Functionally, arylphorin is a larval storage protein (LSP) which may serve as a storage protein used primarily as a source of aromatic amino acids for protein synthesis during metamorphosis. It is a constituent of the sclerotizing system of the cuticle, and serves as a carrier for ecdysteroid hormone. The protein is Arylphorin of Antheraea pernyi (Chinese oak silk moth).